Reading from the N-terminus, the 381-residue chain is Cytochrome b (381 aa).

4 helical membrane passes run 33–53 (FGSL…FLAM), 77–98 (WLIR…FLHV), 113–133 (WNIG…GYVL), and 178–198 (FFAF…VHLL). Residues His-83 and His-97 each coordinate heme b. Heme b is bound by residues His-182 and His-196. Position 201 (His-201) interacts with a ubiquinone. 4 consecutive transmembrane segments (helical) span residues 226 to 246 (IKDA…ALFS), 288 to 308 (LGGV…PLLH), 320 to 340 (VSQT…WIGG), and 347 to 367 (FIII…VLMP).

It belongs to the cytochrome b family. In terms of assembly, the cytochrome bc1 complex contains 11 subunits: 3 respiratory subunits (MT-CYB, CYC1 and UQCRFS1), 2 core proteins (UQCRC1 and UQCRC2) and 6 low-molecular weight proteins (UQCRH/QCR6, UQCRB/QCR7, UQCRQ/QCR8, UQCR10/QCR9, UQCR11/QCR10 and a cleavage product of UQCRFS1). This cytochrome bc1 complex then forms a dimer. The cofactor is heme b.

It localises to the mitochondrion inner membrane. Its function is as follows. Component of the ubiquinol-cytochrome c reductase complex (complex III or cytochrome b-c1 complex) that is part of the mitochondrial respiratory chain. The b-c1 complex mediates electron transfer from ubiquinol to cytochrome c. Contributes to the generation of a proton gradient across the mitochondrial membrane that is then used for ATP synthesis. The protein is Cytochrome b (MT-CYB) of Ningaui yvonnae (Southern ningaui).